Here is a 94-residue protein sequence, read N- to C-terminus: Neutrophil defensin 6 (94 aa).

Residues 1 to 19 form the signal peptide; it reads MRTIAILAAILLFALLAQA. Positions 20-61 are excised as a propeptide; sequence KSLQETADEAATQEQPGEDDQDLAVSFEENGLSTLRASGSQA. 3 cysteine pairs are disulfide-bonded: Cys65–Cys93, Cys67–Cys82, and Cys72–Cys92.

The protein belongs to the alpha-defensin family.

It is found in the secreted. Functionally, defensins 6 and 7 have bacteriostatic activity against Gram-positive bacteria S.aureus and L.monocytogenes and Gram-negative bacterium E.coli and antifungal activity against C.neoformans. Defensin 7 has microbicidial activity against Gram-positive bacteria S.aureus and L.monocytogenes. This chain is Neutrophil defensin 6, found in Macaca mulatta (Rhesus macaque).